Here is a 223-residue protein sequence, read N- to C-terminus: Putative endonuclease segD (223 aa).

Residues 4-87 enclose the GIY-YIG domain; it reads MKYLIYQITN…FVMRTDTYNA (84 aa).

The protein to endonucleases of group I introns of fungi and phage. Mg(2+) is required as a cofactor.

Functionally, probably involved in the movement of the endonuclease-encoding DNA. This Enterobacteria phage T4 (Bacteriophage T4) protein is Putative endonuclease segD (segD).